The sequence spans 253 residues: 3-deoxy-manno-octulosonate cytidylyltransferase (253 aa).

The protein belongs to the KdsB family.

The protein resides in the cytoplasm. It catalyses the reaction 3-deoxy-alpha-D-manno-oct-2-ulosonate + CTP = CMP-3-deoxy-beta-D-manno-octulosonate + diphosphate. It functions in the pathway nucleotide-sugar biosynthesis; CMP-3-deoxy-D-manno-octulosonate biosynthesis; CMP-3-deoxy-D-manno-octulosonate from 3-deoxy-D-manno-octulosonate and CTP: step 1/1. It participates in bacterial outer membrane biogenesis; lipopolysaccharide biosynthesis. Functionally, activates KDO (a required 8-carbon sugar) for incorporation into bacterial lipopolysaccharide in Gram-negative bacteria. The chain is 3-deoxy-manno-octulosonate cytidylyltransferase from Neisseria meningitidis serogroup C (strain 053442).